A 446-amino-acid polypeptide reads, in one-letter code: UDP-N-acetylmuramoylalanine--D-glutamate ligase (446 aa).

Residue 115–121 participates in ATP binding; it reads GSNGKST.

The protein belongs to the MurCDEF family.

The protein localises to the cytoplasm. It catalyses the reaction UDP-N-acetyl-alpha-D-muramoyl-L-alanine + D-glutamate + ATP = UDP-N-acetyl-alpha-D-muramoyl-L-alanyl-D-glutamate + ADP + phosphate + H(+). Its pathway is cell wall biogenesis; peptidoglycan biosynthesis. In terms of biological role, cell wall formation. Catalyzes the addition of glutamate to the nucleotide precursor UDP-N-acetylmuramoyl-L-alanine (UMA). This chain is UDP-N-acetylmuramoylalanine--D-glutamate ligase, found in Hahella chejuensis (strain KCTC 2396).